Here is a 186-residue protein sequence, read N- to C-terminus: Peptidyl-tRNA hydrolase (186 aa).

Tyrosine 14 serves as a coordination point for tRNA. Residue histidine 19 is the Proton acceptor of the active site. TRNA-binding residues include tyrosine 61, asparagine 63, and asparagine 107.

It belongs to the PTH family. As to quaternary structure, monomer.

Its subcellular location is the cytoplasm. The enzyme catalyses an N-acyl-L-alpha-aminoacyl-tRNA + H2O = an N-acyl-L-amino acid + a tRNA + H(+). Functionally, hydrolyzes ribosome-free peptidyl-tRNAs (with 1 or more amino acids incorporated), which drop off the ribosome during protein synthesis, or as a result of ribosome stalling. Catalyzes the release of premature peptidyl moieties from peptidyl-tRNA molecules trapped in stalled 50S ribosomal subunits, and thus maintains levels of free tRNAs and 50S ribosomes. The protein is Peptidyl-tRNA hydrolase of Helicobacter pylori (strain G27).